Here is a 1253-residue protein sequence, read N- to C-terminus: Elongator complex protein 1 (1253 aa).

The segment at Val830 to Ile1253 is mediates dimerization. The segment covering Tyr1126–Lys1141 has biased composition (polar residues). Positions Tyr1126–Gly1153 are disordered. The required for binding to tRNA stretch occupies residues Arg1137 to Lys1155. The span at Asn1142–Gly1153 shows a compositional bias: basic residues.

It belongs to the ELP1/IKA1 family. In terms of assembly, homodimer. Component of the elongator complex.

Its subcellular location is the cytoplasm. The protein operates within tRNA modification; 5-methoxycarbonylmethyl-2-thiouridine-tRNA biosynthesis. Component of the elongator complex, a multiprotein complex which is required for multiple tRNA modifications, including mcm5U (5-methoxycarbonylmethyl uridine), mcm5s2U (5-methoxycarbonylmethyl-2-thiouridine), and ncm5U (5-carbamoylmethyl uridine). The elongator complex catalyzes formation of carboxymethyluridine in the wobble base at position 34 in tRNAs. ELP1 binds to tRNA, mediating interaction of the elongator complex with tRNA. The sequence is that of Elongator complex protein 1 from Schizosaccharomyces pombe (strain 972 / ATCC 24843) (Fission yeast).